We begin with the raw amino-acid sequence, 1033 residues long: Tyrosine-protein kinase-like otk (1033 aa).

A signal peptide spans 1–22 (MTARMISIYGLVLASMMASVLA). Residues 23-581 (SSSRFQRLPQ…GGDGFLVTRA (559 aa)) are Extracellular-facing. Ig-like C2-type domains lie at 25 to 114 (SRFQ…AKLS), 113 to 199 (LSVI…RVMS), 251 to 365 (PEDL…VPVS), 368 to 463 (PGVL…VAIN), and 468 to 558 (PKFS…VQLI). N39 carries an N-linked (GlcNAc...) asparagine glycan. 4 disulfide bridges follow: C46/C95, C137/C188, C276/C354, and C399/C447. 7 N-linked (GlcNAc...) asparagine glycosylation sites follow: N336, N417, N429, N444, N457, N512, and N524. Cysteines 490 and 542 form a disulfide. Residues 582–602 (VLITMTVALAYIVLVVGLMLW) traverse the membrane as a helical segment. The Cytoplasmic segment spans residues 603–1033 (CRYRRQARKA…LSKAMQSAEK (431 aa)). Disordered stretches follow at residues 617–679 (LSTK…KKSA) and 718–760 (SPSD…KTSM). Over residues 655-673 (KSSGDAQKSDDTACSQQSR) the composition is skewed to polar residues. Residue S678 is modified to Phosphoserine. A Protein kinase; inactive domain is found at 692–1028 (LSELIQIGRG…QLGAALSKAM (337 aa)). The segment covering 720-731 (SDKDADTEKQHS) has biased composition (basic and acidic residues).

Belongs to the protein kinase superfamily. Tyr protein kinase family. Insulin receptor subfamily. In terms of assembly, interacts with plexA; component of a receptor complex that mediates the repulsive signaling in response to Semaphorin ligands.

The protein resides in the cell membrane. Its function is as follows. Acts as a calcium-dependent, homophilic cell adhesion molecule that regulates neural recognition during the development of the nervous system. Component of the repulsive Plexin signaling response to regulate motor axon guidance at the embryonic stage. Also component of a receptor complex that is required in the adult visual system to innervate the lamina layer; specific targeting of R1-R6 axons. The chain is Tyrosine-protein kinase-like otk from Drosophila yakuba (Fruit fly).